The following is a 68-amino-acid chain: Large ribosomal subunit protein uL29 (68 aa).

This sequence belongs to the universal ribosomal protein uL29 family.

This is Large ribosomal subunit protein uL29 from Streptococcus gordonii (strain Challis / ATCC 35105 / BCRC 15272 / CH1 / DL1 / V288).